Here is a 642-residue protein sequence, read N- to C-terminus: Tigger transposable element-derived protein 5 (642 aa).

2 stretches are compositionally biased toward pro residues: residues 1 to 10 (MYPAGPPAGP) and 19 to 43 (LPGP…PGPR). A disordered region spans residues 1-45 (MYPAGPPAGPVPRRGRRPLPGPPAPAPAPVPAARPPPPAPGPRPR). Residues 47–98 (AVKMAFRKAYSIKDKLQAIERVKGGERQASVCRDFGVPGGTLRGWLKDEPKL) form the HTH psq-type domain. DNA-binding regions (H-T-H motif) lie at residues 74 to 94 (QASV…WLKD) and 145 to 178 (PLIQ…WQKR). The HTH CENPB-type domain occupies 112–185 (QRKKMRLANE…QKRHGISSQR (74 aa)). The disordered stretch occupies residues 185-233 (RFYGEAGPPAPSPAPGPPVKEEPALPSGAGPLPDRAPAPPPPAEGGYGD). 2 stretches are compositionally biased toward pro residues: residues 192–202 (PPAPSPAPGPP) and 218–227 (DRAPAPPPPA). 2 DDE-1 domains span residues 233–357 (DEQI…VLLV) and 410–477 (RAHI…ERCW). A disordered region spans residues 535-587 (LDDDGGPPEGCREEVGPALPPAAPPAPASLPSAMGGGEDEEEATDYGGTSVPT). Over residues 552-562 (ALPPAAPPAPA) the composition is skewed to pro residues.

The protein belongs to the tigger transposable element derived protein family.

It is found in the nucleus. This chain is Tigger transposable element-derived protein 5 (TIGD5), found in Homo sapiens (Human).